The sequence spans 356 residues: S-adenosylmethionine:tRNA ribosyltransferase-isomerase (356 aa).

It belongs to the QueA family. In terms of assembly, monomer.

It is found in the cytoplasm. The enzyme catalyses 7-aminomethyl-7-carbaguanosine(34) in tRNA + S-adenosyl-L-methionine = epoxyqueuosine(34) in tRNA + adenine + L-methionine + 2 H(+). The protein operates within tRNA modification; tRNA-queuosine biosynthesis. Its function is as follows. Transfers and isomerizes the ribose moiety from AdoMet to the 7-aminomethyl group of 7-deazaguanine (preQ1-tRNA) to give epoxyqueuosine (oQ-tRNA). This is S-adenosylmethionine:tRNA ribosyltransferase-isomerase from Salmonella arizonae (strain ATCC BAA-731 / CDC346-86 / RSK2980).